Here is a 609-residue protein sequence, read N- to C-terminus: MSSVFNAQSFLRTVSSSAGVYRMYDVKGDVIYVGKAKDLKKRLSSYFRKNLDNVKTQALVSHIHHIDVTLTHSETDALLLENDYIKQYMPKYNVLLRDDKSYPYILLSQHEHPRLAYHRGPQREKGHYFGPYPNGGAVRESLHLMQKLFPIRQCDDLYYKSRSRPCLQYQLSRCSAPCVGKVSNADYDEQVKLASLFLKGKDQQVISTLVAKMEQAAQQQEYEQAARFRDQIMALRKVAEQQEVSNNKGDMDVIGVHYASGIACFHLLFIREGKIFGSRSYYPSVPAQTDMDEVLRSFILQFYLNADIQRTIPKEVVISHNFEELHELEAAVSIALNKKFSIKTNVRADRASFLRLAVTNATNAVITRLSHKNTVEQRFVLLEEILELSTPIHRMECFDISHTMGESSVASCVVFNREGPHKGEYRRYNIEGITPGDDYAAMKQAITRRFDKIEAGGKIPDILFIDGGLGQLRIAQKIVDEKFVHLDKAPQLIGVAKGEGRKPGLETLILGDTETSFSLEGDSPALHLIQHIRDESHRFAITGHRNRRQKTRNTSTLESIPGIGPKRRKALLQHLGGLQEVKGASVAELVKVPGISIEMAQTIHDALRG.

The region spanning 16–94 (SSAGVYRMYD…IKQYMPKYNV (79 aa)) is the GIY-YIG domain. The UVR domain occupies 203 to 238 (QQVISTLVAKMEQAAQQQEYEQAARFRDQIMALRKV).

This sequence belongs to the UvrC family. In terms of assembly, interacts with UvrB in an incision complex.

It is found in the cytoplasm. Functionally, the UvrABC repair system catalyzes the recognition and processing of DNA lesions. UvrC both incises the 5' and 3' sides of the lesion. The N-terminal half is responsible for the 3' incision and the C-terminal half is responsible for the 5' incision. The protein is UvrABC system protein C of Shewanella putrefaciens (strain CN-32 / ATCC BAA-453).